Reading from the N-terminus, the 358-residue chain is Peptide chain release factor 1 (358 aa).

Glutamine 233 carries the post-translational modification N5-methylglutamine.

It belongs to the prokaryotic/mitochondrial release factor family. Methylated by PrmC. Methylation increases the termination efficiency of RF1.

It is found in the cytoplasm. Peptide chain release factor 1 directs the termination of translation in response to the peptide chain termination codons UAG and UAA. The chain is Peptide chain release factor 1 from Staphylococcus saprophyticus subsp. saprophyticus (strain ATCC 15305 / DSM 20229 / NCIMB 8711 / NCTC 7292 / S-41).